Reading from the N-terminus, the 430-residue chain is C-terminal-binding protein 1 (430 aa).

Residues 1-59 (MSGVRPPIMNGPMHPRPLVALLDGRDCTVEMPILKDVATVAFCDAQSTQEIHEKVLNEA) are interaction with GLIS2 1. NAD(+) is bound by residues Ser89, 169-174 (IGLGRV), Asp193, 226-232 (CGLNEHN), 253-255 (TAR), and Asp279. Residue Arg255 is part of the active site. The segment at 277–349 (ALDVHESEPF…VNKDHLTAAT (73 aa)) is interaction with GLIS2 2. Residue Glu284 is part of the active site. Phosphoserine is present on Ser289. The active-site Proton donor is His304. Positions 398–430 (SHGLPPVAHPPHAPSPGQTVKPEADRDHTTDQL) are disordered. Phosphoserine is present on Ser412. Lys418 is covalently cross-linked (Glycyl lysine isopeptide (Lys-Gly) (interchain with G-Cter in SUMO)). A compositionally biased stretch (basic and acidic residues) spans 419 to 430 (PEADRDHTTDQL).

It belongs to the D-isomer specific 2-hydroxyacid dehydrogenase family. As to quaternary structure, homo- or heterodimer. Heterodimer with CTBP2. Interacts with ELK3 (via its PXDLS motif). Interacts with RBBP8 (via its PXDLS motif); the interaction is disrupted by binding to adenovirus E1A. Interacts with PNN, MECOM and ZFHX1B. Interacts with ZNF366 (via PXDLS motif). Interaction with SATB1 (non-acetylated form); the interaction stabilizes its attachment to DNA and promotes transcription repression. Interacts with PRDM16; the interaction represses white adipose tissue (WAT)-specific genes expression. Interacts with GLIS2, HIPK2, FOXP1, FOXP2, HDAC4, HDAC5, HDAC9, NRIP1 and WIZ. Interacts with ZNF217. Interacts with BCL6; the interaction is required for BCL6 transcriptional autoinhibition and inhibition of some BCL6 target genes. Interacts with IKZF4. Interacts with MCRIP1 (unphosphorylated form, via the PXDLS motif); competitively inhibiting CTBP-ZEB1 interaction. Interacts with Bassoon/BSN; this interaction targets and anchors CTBP1 to presynapses. Interacts with SIMC1. NAD(+) is required as a cofactor. The level of phosphorylation appears to be regulated during the cell cycle. Phosphorylation by HIPK2 on Ser-412 induces proteasomal degradation. Post-translationally, ADP-ribosylated; when cells are exposed to brefeldin A. In terms of processing, sumoylation on Lys-418 is promoted by the E3 SUMO-protein ligase CBX4.

The protein localises to the cytoplasm. It is found in the nucleus. Its subcellular location is the synapse. It localises to the synaptosome. Its function is as follows. Corepressor targeting diverse transcription regulators such as GLIS2 or BCL6. Has dehydrogenase activity. Involved in controlling the equilibrium between tubular and stacked structures in the Golgi complex. Functions in brown adipose tissue (BAT) differentiation. This is C-terminal-binding protein 1 (Ctbp1) from Rattus norvegicus (Rat).